We begin with the raw amino-acid sequence, 587 residues long: Phosphomethylpyrimidine synthase (587 aa).

The segment at methionine 1 to leucine 58 is disordered. A compositionally biased stretch (basic and acidic residues) spans isoleucine 17 to aspartate 33. Substrate-binding positions include asparagine 180, methionine 209, tyrosine 238, histidine 274, serine 294–glycine 296, aspartate 335–arginine 338, and glutamate 374. Histidine 378 lines the Zn(2+) pocket. Tyrosine 401 serves as a coordination point for substrate. A Zn(2+)-binding site is contributed by histidine 442. The [4Fe-4S] cluster site is built by cysteine 522, cysteine 525, and cysteine 530.

This sequence belongs to the ThiC family. [4Fe-4S] cluster is required as a cofactor.

The catalysed reaction is 5-amino-1-(5-phospho-beta-D-ribosyl)imidazole + S-adenosyl-L-methionine = 4-amino-2-methyl-5-(phosphooxymethyl)pyrimidine + CO + 5'-deoxyadenosine + formate + L-methionine + 3 H(+). It functions in the pathway cofactor biosynthesis; thiamine diphosphate biosynthesis. Its function is as follows. Catalyzes the synthesis of the hydroxymethylpyrimidine phosphate (HMP-P) moiety of thiamine from aminoimidazole ribotide (AIR) in a radical S-adenosyl-L-methionine (SAM)-dependent reaction. The sequence is that of Phosphomethylpyrimidine synthase from Corynebacterium glutamicum (strain ATCC 13032 / DSM 20300 / JCM 1318 / BCRC 11384 / CCUG 27702 / LMG 3730 / NBRC 12168 / NCIMB 10025 / NRRL B-2784 / 534).